Reading from the N-terminus, the 127-residue chain is MPKEFSRSQRVAEQVRRELAELIRLEVKDPRVGFITLTDVEITPDYAHAKVFFTSMKGEEGLDEILTGLHRASGFLRRELGKRVRIHTLPELHFHYDSSVERGSRMSQLIDQVVRDDDARHKDDPES.

It belongs to the RbfA family. As to quaternary structure, monomer. Binds 30S ribosomal subunits, but not 50S ribosomal subunits or 70S ribosomes.

It is found in the cytoplasm. One of several proteins that assist in the late maturation steps of the functional core of the 30S ribosomal subunit. Associates with free 30S ribosomal subunits (but not with 30S subunits that are part of 70S ribosomes or polysomes). Required for efficient processing of 16S rRNA. May interact with the 5'-terminal helix region of 16S rRNA. The protein is Ribosome-binding factor A of Aromatoleum aromaticum (strain DSM 19018 / LMG 30748 / EbN1) (Azoarcus sp. (strain EbN1)).